The primary structure comprises 541 residues: MSAKEVRFGTDARGRMLKGINTLADTVKITLGPKGRNVILDTSYGAPRITKDGVTVAREIELSDRFENVGAQMVKEVASRTNEEAGDGTTTATVLAQAIAKEGMKAVAAGMNPMDLKRGIDRAVAIVIAEIRSMSRPVGDSAEIAKVGALSANGEAAIGRQIADAMAKVGTAGVIKVENKGLETETEVVEGMQFDRGYLSPYFITHAQKMVVELDDCAILLHEGKLTSLASMVPLLEAVVQAEKQLLVVAEDVEGEALTTLVVNKLRGGLKVAAAKAPGFGDGRAAMLEDLAVLTGAHLISAELGTKLETVTLDMLGFAKKVVLTKDSTILIDSAGDKAAIASRIGQIRNQIEDTTSAYNKEKLQERLARLAGGVAVIRVGGATEIEVKERRDRVEDTLNATRAAVQEGVVPGGGAALIHAGKALAGLKGDNPDQDAGIKIIRRAIQAPLRQIADNAGIDGSVVAGKVIENDSATFGFDAQLETYGDMLQAGIIDPTKVVRIALEDAASIAGLLITTEVIIAHKPERGERMSQMDEMGGMM.

ATP-binding positions include threonine 30–proline 33, lysine 51, aspartate 87–threonine 91, glycine 414, and aspartate 495.

It belongs to the chaperonin (HSP60) family. As to quaternary structure, forms a cylinder of 14 subunits composed of two heptameric rings stacked back-to-back. Interacts with the co-chaperonin GroES.

It localises to the cytoplasm. The catalysed reaction is ATP + H2O + a folded polypeptide = ADP + phosphate + an unfolded polypeptide.. Together with its co-chaperonin GroES, plays an essential role in assisting protein folding. The GroEL-GroES system forms a nano-cage that allows encapsulation of the non-native substrate proteins and provides a physical environment optimized to promote and accelerate protein folding. The sequence is that of Chaperonin GroEL 2 from Cereibacter sphaeroides (Rhodobacter sphaeroides).